We begin with the raw amino-acid sequence, 594 residues long: Glutamate decarboxylase 1 (594 aa).

Positions 1–13 (MASSTPSSSATSS) are enriched in low complexity. Residues 1-23 (MASSTPSSSATSSNAGADPNTTN) are disordered. Phosphoserine is present on serine 78. 190–192 (QLS) contacts 4-aminobutanoate. Lysine 405 is subject to N6-(pyridoxal phosphate)lysine. Arginine 567 serves as a coordination point for 4-aminobutanoate.

It belongs to the group II decarboxylase family. Homodimer. Pyridoxal 5'-phosphate is required as a cofactor.

It catalyses the reaction L-glutamate + H(+) = 4-aminobutanoate + CO2. Catalyzes the synthesis of the inhibitory neurotransmitter gamma-aminobutyric acid (GABA) with pyridoxal 5'-phosphate as cofactor. In Felis catus (Cat), this protein is Glutamate decarboxylase 1 (GAD1).